We begin with the raw amino-acid sequence, 288 residues long: Aminoglycoside N(3)-acetyltransferase VII (288 aa).

Belongs to the antibiotic N-acetyltransferase family.

It catalyses the reaction a 2-deoxystreptamine antibiotic + acetyl-CoA = an N(3)-acetyl-2-deoxystreptamine antibiotic + CoA + H(+). Functionally, resistance to paromomycin. The polypeptide is Aminoglycoside N(3)-acetyltransferase VII (aacC7) (Streptomyces paromomycinus (Streptomyces rimosus subsp. paromomycinus)).